The primary structure comprises 791 residues: Transient receptor potential cation channel subfamily V member 3 (791 aa).

Disordered regions lie at residues 1-37, 52-71, and 76-113; these read MNAH…LTPT, PNPT…MDSN, and LSGN…EEQR. Residues 1–430 are Cytoplasmic-facing; the sequence is MNAHSKEMAP…TLEPLHTLLH (430 aa). Over residues 95 to 105 the composition is skewed to polar residues; that stretch reads ETPSNPNSPSA. 7 ANK repeats span residues 117-148, 170-198, 214-243, 261-291, 298-330, 340-362, and 398-420; these read KRLK…LCRR, TCLM…EEND, EGQT…DVNA, FGET…DITS, NILH…RSGN, DGLT…YILS, and TTDN…HEML. A helical membrane pass occupies residues 431–460; that stretch reads TKWKKFAKYMFFLSFCFYFFYNITLTLVSY. Over 461–479 the chain is Extracellular; that stretch reads YRPREDEDLPHPLALTHKM. A helical transmembrane segment spans residues 480-508; the sequence is SWLQLLGRMFVLIWATCISVKEGIAIFLL. At 509–519 the chain is on the cytoplasmic side; the sequence is RPSDLQSILSD. A helical membrane pass occupies residues 520–540; the sequence is AWFHFVFFVQAVLVILSVFLY. The Extracellular segment spans residues 541-545; sequence LFAYK. A helical membrane pass occupies residues 546 to 566; the sequence is EYLACLVLAMALGWANMLYYT. The Cytoplasmic segment spans residues 567–569; sequence RGF. Residues 570-608 form a helical membrane-spanning segment; that stretch reads QSMGMYSVMIQKVILHDVLKFLFVYILFLLGFGVALASL. Over 609-620 the chain is Extracellular; that stretch reads IEKCSKDKKDCS. The pore-forming intramembrane region spans 621 to 646; that stretch reads SYGSFSDAVLELFKLTIGLGDLNIQQ. G638 serves as a coordination point for Na(+). Residues 647–649 lie on the Extracellular side of the membrane; that stretch reads NST. The helical transmembrane segment at 650 to 686 threads the bilayer; it reads YPILFLFLLITYVILTFVLLLNMLIALMGETVENVSK. Residues 687-791 are Cytoplasmic-facing; sequence ESERIWRLQR…ELDEFPETSV (105 aa).

The protein belongs to the transient receptor (TC 1.A.4) family. TrpV subfamily. TRPV3 sub-subfamily. In terms of assembly, homotetramer. May convert from a homotetramer to a homopentamer to allow pore dilation. Interacts with TRPV1; may form a heteromeric channel with TRPV1. Interacts with SNX11; this interaction promotes TRPV3 trafficking from the cell membrane to lysosome for degradation. Expressed in keratinocytes and hair follicles.

It localises to the cell membrane. The protein resides in the cytoplasm. It is found in the lysosome. It catalyses the reaction Ca(2+)(in) = Ca(2+)(out). The enzyme catalyses Mg(2+)(in) = Mg(2+)(out). The catalysed reaction is Na(+)(in) = Na(+)(out). It carries out the reaction K(+)(in) = K(+)(out). Activated by cannabinoid that binds to the vanilloid binding pocket. Diphenylboronic anhydride induces pore dilation and enhances cation permeability by promoting the conversion to a homopentamer. Non-selective calcium permeant cation channel. It is activated by innocuous (warm) temperatures and shows an increased response at noxious temperatures greater than 39 degrees Celsius. Activation exhibits an outward rectification. The channel pore can dilate to provide permeability to larger cations. May associate with TRPV1 and may modulate its activity. Is a negative regulator of hair growth and cycling: TRPV3-coupled signaling suppresses keratinocyte proliferation in hair follicles and induces apoptosis and premature hair follicle regression (catagen). This chain is Transient receptor potential cation channel subfamily V member 3 (Trpv3), found in Mus musculus (Mouse).